The chain runs to 507 residues: DNA ligase B (507 aa).

Positions 1 to 172 are not required for adenylyltransferase activity, required for nick joining; it reads MLLHDVAITS…AAAAGLSGAA (172 aa). Residue E209 participates in ATP binding. The active-site N6-AMP-lysine intermediate is the K211. Residues R216, R231, E260, F300, R372, and K378 each contribute to the ATP site.

The protein belongs to the ATP-dependent DNA ligase family. As to quaternary structure, monomer. Requires Mg(2+) as cofactor.

It carries out the reaction ATP + (deoxyribonucleotide)n-3'-hydroxyl + 5'-phospho-(deoxyribonucleotide)m = (deoxyribonucleotide)n+m + AMP + diphosphate.. In terms of biological role, DNA ligase that seals nicks in double-stranded DNA during DNA replication, DNA recombination and DNA repair. The polypeptide is DNA ligase B (ligB) (Mycobacterium tuberculosis (strain ATCC 25618 / H37Rv)).